Reading from the N-terminus, the 829-residue chain is E3 ubiquitin-protein ligase Jade-2 (829 aa).

The segment at 1-52 (MEEKRRKYSISSDNSDTTDGHVTSTSASRCSKLPSSTKSGWPRQNEKKPSEV) is disordered. A phosphoserine mark is found at serine 9 and serine 15. Over residues 9–39 (SISSDNSDTTDGHVTSTSASRCSKLPSSTKS) the composition is skewed to polar residues. 2 positions are modified to N6-acetyllysine: lysine 32 and lysine 38. Serine 117 carries the phosphoserine modification. The PHD-type 1 zinc finger occupies 199–249 (DVVCDVCRSPEGEDGNEMVFCDKCNVCVHQACYGILKVPTGSWLCRTCALG). Residues 251–285 (QPKCLLCPKRGGALKPTRSGTKWVHVSCALWIPEV) form a C2HC pre-PHD-type zinc finger. Residue lysine 298 is modified to N6-acetyllysine. Residues 309-365 (LSCSLCKECTGTCIQCSMPSCITAFHVTCAFDRGLEMRTILADNDEVKFKSLCQEHS) form a PHD-type 2 zinc finger. 3 disordered regions span residues 362–383 (QEHS…PSQA), 517–555 (REPS…AGPE), and 622–817 (SFMR…REAG). Basic residues predominate over residues 522–535 (RRSKGKKNDSKRKG). Residues 536 to 552 (REGPKGSSPEKKEKVKA) are compositionally biased toward basic and acidic residues. Residues 637 to 650 (KARGRTRLPAKKKP) show a composition bias toward basic residues. Basic and acidic residues predominate over residues 776 to 786 (ERPKVSLHFDT). Residues 792-806 (FSDEEMSDSEVEAED) are compositionally biased toward acidic residues.

It belongs to the JADE family. Component of the HBO1 complex composed at least of ING4 or ING5, MYST2/HBO1, MEAF6, and one of JADE1, JADE2 and JADE3. Interacts (via C-terminus) with KDM1A (via AOD/Tower domain).

It catalyses the reaction S-ubiquitinyl-[E2 ubiquitin-conjugating enzyme]-L-cysteine + [acceptor protein]-L-lysine = [E2 ubiquitin-conjugating enzyme]-L-cysteine + N(6)-ubiquitinyl-[acceptor protein]-L-lysine.. It functions in the pathway protein modification; protein ubiquitination. Scaffold subunit of some HBO1 complexes, which have a histone H4 acetyltransferase activity. Acts as a E3 ubiquitin-protein ligase mediating the ubiquitination and subsequent proteasomal degradation of target protein histone demethylase KDM1A. Also acts as a ubiquitin ligase E3 toward itself. Positive regulator of neurogenesis. The polypeptide is E3 ubiquitin-protein ligase Jade-2 (Jade2) (Mus musculus (Mouse)).